A 516-amino-acid polypeptide reads, in one-letter code: Cytochrome P450 monooxygenase lcsI (516 aa).

The helical transmembrane segment at 20 to 42 threads the bilayer; that stretch reads ICVAAGCAFALSLLYLYVRALYL. N-linked (GlcNAc...) asparagine glycosylation is found at Asn131, Asn184, Asn415, Asn420, and Asn442. Cys456 is a heme binding site.

Belongs to the cytochrome P450 family. It depends on heme as a cofactor.

The protein resides in the membrane. It functions in the pathway secondary metabolite biosynthesis. Cytochrome P450 monooxygenase; part of the gene cluster that mediates the biosynthesis of the lipopeptide antibiotics leucinostatins that show extensive biological activities, including antimalarial, antiviral, antibacterial, antifungal, and antitumor activities, as well as phytotoxic. Leucinostatin A contains nine amino acid residues, including the unusual amino acid 4-methyl-L-proline (MePro), 2-amino-6-hydroxy-4-methyl-8-oxodecanoic acid (AHyMeOA), 3-hydroxyleucine (HyLeu), alpha-aminoisobutyric acid (AIB), beta-Ala, a 4-methylhex-2-enoic acid at the N-terminus as well as a N1,N1-dimethylpropane-1,2-diamine (DPD) at the C-terminus. The biosynthesis of leucinostatins is probably initiated with the assembly of 4-methylhex-2-enoic acid by a reducing PKS. Two reducing polyketide synthases, lcsB and lcsC, have been identified in the cluster and it is not clear which is the one that assembles 4-methylhex-2-enoic acid since both contain KS, AT, DH, cMT, ER, KR and ACP domains. The polyketide residue might be transferred to the NRPS lcsA, mediated by two additional enzymes, the acyl-CoA ligase lcsD and the thioesterase lcsE. The linear polyketide carboxylic acid, which is released from PKS, is converted to a CoA thioester by lcsD, and then lcsE hydrolyzes the thiol bond and shuttles the polyketide intermediate to lcsA. The C domain of the first module catalyzed the condensation of 4-methylhex-2-enoic acid and MePro carried by domain A1, followed by successive condensations of nine amino acids to trigger the elongation of the linear peptide. A5 and A6 domains of lcsA are proposed to incorporate leucine, A2 AHyMeOA, and A3 incorporates HyLeu. A4, A7 and A8 incorporate AIB. The AHyMeOA in leucinostatin A activated by the A2 might be produced by the second PKS (lcsB or lcsC) present within the cluster. The MePro is probably produced via leucine cyclization and may originate from a separate pathway, independent of the cluster. Another nonproteinogenic amino acid, beta-Ala, could be produced by an aspartic acid decarboxylase also localized outside of the cluster. Two candidates are VFPBJ_01400 and VFPBJ_10476. The final peptide scaffold may be released by the NAD(P)H-dependent thioester reductase (TE) at the C-terminal region of lcsA. Transamination of the lcsA product by the transaminase lcsP may produce DPD at the C-terminus. Further hydroxylation steps performed alternatively by the cytochrome P450 monooxygenases lcsI, lcsK and lcsN then yield the non-methylated leucinostatins precursor. It is also possible that leucines can be hydroxylated prior to their incorporation into the peptide. Varying extents of methylation then lead to the formation of leucinostatins A and B. The polypeptide is Cytochrome P450 monooxygenase lcsI (Purpureocillium lilacinum (Paecilomyces lilacinus)).